The primary structure comprises 413 residues: Serine hydroxymethyltransferase (413 aa).

Residues leucine 119 and 123–125 (GHL) each bind (6S)-5,6,7,8-tetrahydrofolate. Position 228 is an N6-(pyridoxal phosphate)lysine (lysine 228).

Belongs to the SHMT family. Homodimer. Requires pyridoxal 5'-phosphate as cofactor.

It localises to the cytoplasm. The enzyme catalyses (6R)-5,10-methylene-5,6,7,8-tetrahydrofolate + glycine + H2O = (6S)-5,6,7,8-tetrahydrofolate + L-serine. It participates in one-carbon metabolism; tetrahydrofolate interconversion. It functions in the pathway amino-acid biosynthesis; glycine biosynthesis; glycine from L-serine: step 1/1. Functionally, catalyzes the reversible interconversion of serine and glycine with tetrahydrofolate (THF) serving as the one-carbon carrier. This reaction serves as the major source of one-carbon groups required for the biosynthesis of purines, thymidylate, methionine, and other important biomolecules. Also exhibits THF-independent aldolase activity toward beta-hydroxyamino acids, producing glycine and aldehydes, via a retro-aldol mechanism. The polypeptide is Serine hydroxymethyltransferase (Caldanaerobacter subterraneus subsp. tengcongensis (strain DSM 15242 / JCM 11007 / NBRC 100824 / MB4) (Thermoanaerobacter tengcongensis)).